A 308-amino-acid chain; its full sequence is GTPase IMAP family member 5 (308 aa).

Topologically, residues 1 to 283 (MEHLQKSTYG…VKSCWSSHTA (283 aa)) are cytoplasmic. The 204-residue stretch at 24–227 (SSCLRILLVG…HSNDLFLHAE (204 aa)) folds into the AIG1-type G domain. Residues 33–41 (GKSGCGKSA), Ser-54, 151–153 (RKE), and Asn-188 contribute to the GTP site. Residues 284 to 304 (ACALLIVLGLTLLTTFINLCI) form a helical; Anchor for type IV membrane protein membrane-spanning segment. Residues 305 to 308 (SRCK) are Mitochondrial intermembrane-facing.

Belongs to the TRAFAC class TrmE-Era-EngA-EngB-Septin-like GTPase superfamily. AIG1/Toc34/Toc159-like paraseptin GTPase family. IAN subfamily. As to quaternary structure, interacts with BAD, BAK1, BAX, BCL2, BCL2L1/Bcl-xL and BCL2L11/BimEL. The interaction with BAX is increased, when cells initiate apoptosis upon IL2 withdrawal. Forms a complex with BCL2L1 or MCL1 and HSPA8/HSC70; the interaction between HSPA8 and BCL2L1 or MCL1 is impaired in the absence of GIMAP5. May interact (via N-terminus) with microtubules. As to expression, expressed in thymus (in thymocytes), spleen (in splenocytes), lymph node and lung. Highly expressed in T lymphocytes. Expressed in B cells and in distinct lineages of hematopoietic bone marrow cells, including natural killer, B, T, myeloid and erythroid lineages. Expressed in liver endothelial cells.

Its subcellular location is the lysosome. It localises to the lysosome membrane. The protein localises to the endosome. The protein resides in the multivesicular body membrane. It is found in the endosome membrane. Functionally, plays a role in T lymphocyte development and the optimal generation of CD4/CD8 double-positive thymocytes. Inhibitor of GSK3A. May act by sequestering GSK3A in cytoplasmic vesicles and impairing its translocation to the nucleus. Consequently, impairs GSK3A-dependent transcriptional program and regulation of the DNA damage response occurring during T cells proliferation. Required for the survival of bone marrow hematopoietic stem cells, as well as of peripheral T cells, natural killer (NK) and NK T-cell development and the maintenance of normal liver function. May promote the survival of mature T lymphocytes upon cytokine withdrawal. May regulate Ca(2+) homeostasis by modulating lysosomal Ca(2+) stores, preventing its accumulation in the absence of T cell activation. May play a role in mitochondrial DNA segregation in hematopoietic tissues. Is a regulator of liver endothelial cell homeostasis. The chain is GTPase IMAP family member 5 (Gimap5) from Mus musculus (Mouse).